A 274-amino-acid polypeptide reads, in one-letter code: 4-hydroxy-tetrahydrodipicolinate reductase (274 aa).

Residues 11-16 and Glu37 contribute to the NAD(+) site; that span reads GGSGRM. Arg38 provides a ligand contact to NADP(+). Residues 101–103 and 125–128 each bind NAD(+); these read GTT and APNM. The active-site Proton donor/acceptor is the His158. His159 lines the (S)-2,3,4,5-tetrahydrodipicolinate pocket. Residue Lys162 is the Proton donor of the active site. 168–169 is a binding site for (S)-2,3,4,5-tetrahydrodipicolinate; that stretch reads GT.

Belongs to the DapB family.

The protein localises to the cytoplasm. The enzyme catalyses (S)-2,3,4,5-tetrahydrodipicolinate + NAD(+) + H2O = (2S,4S)-4-hydroxy-2,3,4,5-tetrahydrodipicolinate + NADH + H(+). It catalyses the reaction (S)-2,3,4,5-tetrahydrodipicolinate + NADP(+) + H2O = (2S,4S)-4-hydroxy-2,3,4,5-tetrahydrodipicolinate + NADPH + H(+). Its pathway is amino-acid biosynthesis; L-lysine biosynthesis via DAP pathway; (S)-tetrahydrodipicolinate from L-aspartate: step 4/4. In terms of biological role, catalyzes the conversion of 4-hydroxy-tetrahydrodipicolinate (HTPA) to tetrahydrodipicolinate. This Shewanella pealeana (strain ATCC 700345 / ANG-SQ1) protein is 4-hydroxy-tetrahydrodipicolinate reductase.